Reading from the N-terminus, the 131-residue chain is Large ribosomal subunit protein bL17 (131 aa).

This sequence belongs to the bacterial ribosomal protein bL17 family. Part of the 50S ribosomal subunit. Contacts protein L32.

The sequence is that of Large ribosomal subunit protein bL17 from Methylacidiphilum infernorum (isolate V4) (Methylokorus infernorum (strain V4)).